The sequence spans 486 residues: MVDERTPLKAVTTREDAPTAVMRPKPVGKSIFALSILGTLSAASISLFSMYGQTLQHKLGFTQVQVNSVSISSLLGMYLLMPVIGYLGDTYGSNYLALFSWITFPASYSIASGIFSTAADWHRETGEALPRAAPEMALCFFFIGASTSCMYYASLKASAHSMSVYFAEDGKLQTYTPGYAIWGPVAAFGLSSLWQSQLLRAVFITGKNVNVAGIFLFFAGLYAVICGIIFFSCRTAESMASELRKKAEASTDCNCDGPGHEGATLKEFFTDKTAWLFLLCFVFIGGPFEMFQNNMGAILDTVTVENADSPSFSTHVSLFATFSTVSRLVVGFSSEAMESHVSRPVLLSVIALVAACIHLMVPSGIFTVFDNAKYFSVVTIVNGFSYGSSFTLVPTIVTKVWGIANLGTIWGSFILALAVGSLGYGLLFAKVYDAASEVGVGSMSQVCSGVHCYGLTFVITGTGLAFAAAAVFFIWVFMWKKRGIHM.

12 consecutive transmembrane segments (helical) span residues 31–51 (IFAL…FSMY), 68–88 (SVSI…GYLG), 95–115 (YLAL…SGIF), 135–155 (EMAL…YASL), 174–194 (TYTP…SSLW), 211–231 (VAGI…IIFF), 268–288 (FFTD…GGPF), 312–333 (FSTH…VGFS), 349–369 (VIAL…FTVF), 377–397 (VVTI…PTIV), 409–429 (IWGS…LLFA), and 457–477 (FVIT…IWVF).

This sequence belongs to the major facilitator superfamily.

The protein localises to the vacuole membrane. In terms of biological role, probable transporter. The sequence is that of Probable transporter MCH1 (MCH1) from Yarrowia lipolytica (strain CLIB 122 / E 150) (Yeast).